A 976-amino-acid chain; its full sequence is Poly(ADP-ribose) glycohydrolase (976 aa).

The residue at position 1 (methionine 1) is an N-acetylmethionine. The tract at residues 1–69 (MNAGPGCEPC…GRAGQHRGSA (69 aa)) is disordered. The segment at 1–456 (MNAGPGCEPC…LSPDKKWLGT (456 aa)) is A-domain. Positions 10 to 16 (CTKRPRW) match the Nuclear localization signal motif. Position 22 is a phosphoserine (serine 22). Positions 37–46 (RVLDPKDAHV) are enriched in basic and acidic residues. Serine 68 is subject to Phosphoserine. Positions 76–83 (QKTITSWM) match the PIP-box (PCNA interacting peptide) motif. Residues serine 133 and serine 137 each carry the phosphoserine modification. Phosphothreonine is present on threonine 139. Residues 183 to 350 (SNANIDRSPQ…PSRFQARDAD (168 aa)) form a disordered region. 2 stretches are compositionally biased toward basic and acidic residues: residues 191 to 206 (PQND…ENRD) and 222 to 233 (TTEDEQAREAKS). Residue serine 197 is modified to Phosphoserine. Threonine 199 is modified (phosphothreonine). Serine 261, serine 264, serine 286, serine 291, serine 298, serine 302, and serine 316 each carry phosphoserine. A compositionally biased stretch (acidic residues) spans 316–331 (SEADEETSPGFDEQED). A compositionally biased stretch (polar residues) spans 332 to 342 (GSSSQTANKPS). Lysine 340 is subject to N6-acetyllysine. Residue serine 448 is modified to Phosphoserine. A catalytic region spans residues 610 to 795 (QPIPLLKQKM…TEQYSEYTGY (186 aa)). Position 726–727 (726–727 (IE)) interacts with substrate. Aspartate 737 is an active-site residue. Substrate-binding residues include asparagine 740 and glutamine 754. Residues glutamate 755 and glutamate 756 contribute to the active site. Substrate is bound by residues tyrosine 795 and 869–874 (NWGCGA).

It belongs to the poly(ADP-ribose) glycohydrolase family. Interacts with PCNA. Interacts with NUDT5. In terms of tissue distribution, ubiquitously expressed.

The protein resides in the nucleus. The protein localises to the cytoplasm. Its subcellular location is the mitochondrion. It is found in the mitochondrion matrix. The catalysed reaction is [(1''-&gt;2')-ADP-alpha-D-ribose](n) + H2O = [(1''-&gt;2')-ADP-alpha-D-ribose](n-1) + ADP-D-ribose. Functionally, poly(ADP-ribose) glycohydrolase that degrades poly(ADP-ribose) by hydrolyzing the ribose-ribose bonds present in poly(ADP-ribose). PARG acts both as an endo- and exoglycosidase, releasing poly(ADP-ribose) of different length as well as ADP-ribose monomers. It is however unable to cleave the ester bond between the terminal ADP-ribose and ADP-ribosylated residues, leaving proteins that are mono-ADP-ribosylated. Poly(ADP-ribose) is synthesized after DNA damage is only present transiently and is rapidly degraded by PARG. Required to prevent detrimental accumulation of poly(ADP-ribose) upon prolonged replicative stress, while it is not required for recovery from transient replicative stress. Responsible for the prevalence of mono-ADP-ribosylated proteins in cells, thanks to its ability to degrade poly(ADP-ribose) without cleaving the terminal protein-ribose bond. Required for retinoid acid-dependent gene transactivation, probably by removing poly(ADP-ribose) from histone demethylase KDM4D, allowing chromatin derepression at RAR-dependent gene promoters. Involved in the synthesis of ATP in the nucleus, together with PARP1, NMNAT1 and NUDT5. Nuclear ATP generation is required for extensive chromatin remodeling events that are energy-consuming. This chain is Poly(ADP-ribose) glycohydrolase, found in Homo sapiens (Human).